A 653-amino-acid polypeptide reads, in one-letter code: Structural protein ORF653 (653 aa).

Residues Ala-300–Leu-330 adopt a coiled-coil conformation. A compositionally biased stretch (basic and acidic residues) spans Glu-302 to Ser-326. 3 disordered regions span residues Glu-302–Gln-329, Gly-344–Pro-388, and Ala-626–Ser-653. Over residues Glu-371–Arg-381 the composition is skewed to low complexity. Residues Lys-505–Thr-649 adopt a coiled-coil conformation. Residues Glu-630–Asn-647 show a composition bias toward acidic residues.

The protein localises to the virion. The chain is Structural protein ORF653 from Acidianus two-tailed virus (ATV).